Consider the following 227-residue polypeptide: MLQATCARIARRFVWRNRMPRRLFIGLFLLPLPLFAAPPKDELAYAVGARLGMRLQQEMPGLELSELLLGLRQAYRGEALEIPPERIEQLLLQHENATTETPRTTPAEARFLANEKARFGVRELTGGVLVSELRRGQGNGIGAATQVHVRYRGLLADGQVFDQSESAEWFALDSVIEGWRTALRAMPVGARWRVVIPSAQAYGHEGAGDLIPPDAPLVFEIDLLGFR.

The PPIase FKBP-type domain occupies 144-227; it reads ATQVHVRYRG…VFEIDLLGFR (84 aa).

The protein belongs to the FKBP-type PPIase family.

The catalysed reaction is [protein]-peptidylproline (omega=180) = [protein]-peptidylproline (omega=0). PPIases accelerate the folding of proteins. The protein is Probable FKBP-type 25 kDa peptidyl-prolyl cis-trans isomerase (fkl) of Pseudomonas aeruginosa (strain ATCC 15692 / DSM 22644 / CIP 104116 / JCM 14847 / LMG 12228 / 1C / PRS 101 / PAO1).